A 431-amino-acid chain; its full sequence is MSTSSSAVSQLKNSPLAGNINYEPTVWSRADALKVNENDPTTTQPLVSADFPVMSDTVFIWDTMPLRELDGTVVSVNGWSVILTLTADRHPDDPQYLDANGRYDIKRDWEDRHGRARMCYWYSRTGKDWIFGGRVMAEGVSPTTREWAGTPILLNDKGDIDLYYTCVTPGAAVAKVRGRIVTSDQGVELKDFTQVKKLFEADGTYYQTEAQNSSWNFRDPSPFIDPNDGKLYMVFEGNVAGERGSHTVGAAELGPVPPGHEDVGGARFQVGCIGLAVAKDLSGEEWEILPPLVTAVGVNDQTERPHYVFQDGKYYLFTISHKFTYADGITGPDGVYGFVGEHLFGPYRPMNASGLVLGNPPEQPFQTYSHCVMPNGLVTSFIDSVPTEGEDYRIGGTEAPTVRILLKGDRSFVQEEYDYGYIPAMKDVQLS.

5 residues coordinate sucrose: W61, D62, A148, R218, and D219. The Nucleophile role is filled by D62. The active-site Proton donor/acceptor is the E303.

It belongs to the glycosyl hydrolase 68 family.

It is found in the periplasm. The catalysed reaction is [6)-beta-D-fructofuranosyl-(2-&gt;](n) alpha-D-glucopyranoside + sucrose = [6)-beta-D-fructofuranosyl-(2-&gt;](n+1) alpha-D-glucopyranoside + D-glucose. In terms of biological role, catalyzes the synthesis of levan, a fructose polymer, by transferring the fructosyl moiety from sucrose to a growing acceptor molecule. The protein is Levansucrase LscC of Pseudomonas savastanoi pv. glycinea (Pseudomonas syringae pv. glycinea).